We begin with the raw amino-acid sequence, 85 residues long: Large ribosomal subunit protein bL31B (85 aa).

It belongs to the bacterial ribosomal protein bL31 family. Type B subfamily. As to quaternary structure, part of the 50S ribosomal subunit.

The sequence is that of Large ribosomal subunit protein bL31B from Micrococcus luteus (strain ATCC 4698 / DSM 20030 / JCM 1464 / CCM 169 / CCUG 5858 / IAM 1056 / NBRC 3333 / NCIMB 9278 / NCTC 2665 / VKM Ac-2230) (Micrococcus lysodeikticus).